The primary structure comprises 102 residues: Citrate lyase acyl carrier protein (102 aa).

The residue at position 14 (S14) is an O-(phosphoribosyl dephospho-coenzyme A)serine.

The protein belongs to the CitD family. In terms of assembly, oligomer with a subunit composition of (alpha,beta,gamma)6.

It is found in the cytoplasm. Its function is as follows. Covalent carrier of the coenzyme of citrate lyase. In Serratia proteamaculans (strain 568), this protein is Citrate lyase acyl carrier protein.